Here is a 245-residue protein sequence, read N- to C-terminus: Probable phosphatase YcdX (245 aa).

Positions 7, 9, 15, 40, 73, 101, 131, 192, and 194 each coordinate Zn(2+).

Belongs to the PHP family. Homotrimer. Zn(2+) is required as a cofactor.

The sequence is that of Probable phosphatase YcdX from Escherichia coli O127:H6 (strain E2348/69 / EPEC).